Here is a 272-residue protein sequence, read N- to C-terminus: Putative phosphoenolpyruvate synthase regulatory protein (272 aa).

152 to 159 (GVSRCGKT) contacts ADP.

It belongs to the pyruvate, phosphate/water dikinase regulatory protein family. PSRP subfamily.

The catalysed reaction is [pyruvate, water dikinase] + ADP = [pyruvate, water dikinase]-phosphate + AMP + H(+). The enzyme catalyses [pyruvate, water dikinase]-phosphate + phosphate + H(+) = [pyruvate, water dikinase] + diphosphate. Functionally, bifunctional serine/threonine kinase and phosphorylase involved in the regulation of the phosphoenolpyruvate synthase (PEPS) by catalyzing its phosphorylation/dephosphorylation. In Pseudomonas fluorescens (strain Pf0-1), this protein is Putative phosphoenolpyruvate synthase regulatory protein.